Here is a 104-residue protein sequence, read N- to C-terminus: Flagellar hook-basal body complex protein FliE (104 aa).

The protein belongs to the FliE family.

It localises to the bacterial flagellum basal body. This is Flagellar hook-basal body complex protein FliE from Salmonella heidelberg (strain SL476).